The following is a 1405-amino-acid chain: ATP-dependent helicase/nuclease subunit A (1405 aa).

In terms of domain architecture, UvrD-like helicase ATP-binding spans arginine 7–arginine 482. An ATP-binding site is contributed by alanine 28–threonine 35. The UvrD-like helicase C-terminal domain occupies proline 551–glycine 914. Disordered regions lie at residues glutamine 778–proline 797 and alanine 1132–threonine 1165. Residues glycine 787 to valine 796 show a composition bias toward low complexity.

This sequence belongs to the helicase family. AddA subfamily. In terms of assembly, heterodimer of AddA and AddB/RexB. The cofactor is Mg(2+).

It carries out the reaction Couples ATP hydrolysis with the unwinding of duplex DNA by translocating in the 3'-5' direction.. It catalyses the reaction ATP + H2O = ADP + phosphate + H(+). Functionally, the heterodimer acts as both an ATP-dependent DNA helicase and an ATP-dependent, dual-direction single-stranded exonuclease. Recognizes the chi site generating a DNA molecule suitable for the initiation of homologous recombination. The AddA nuclease domain is required for chi fragment generation; this subunit has the helicase and 3' -&gt; 5' nuclease activities. The protein is ATP-dependent helicase/nuclease subunit A of Moorella thermoacetica (strain ATCC 39073 / JCM 9320).